A 122-amino-acid polypeptide reads, in one-letter code: Large ribosomal subunit protein uL14 (122 aa).

It belongs to the universal ribosomal protein uL14 family. Part of the 50S ribosomal subunit. Forms a cluster with proteins L3 and L19. In the 70S ribosome, L14 and L19 interact and together make contacts with the 16S rRNA in bridges B5 and B8.

Its function is as follows. Binds to 23S rRNA. Forms part of two intersubunit bridges in the 70S ribosome. The sequence is that of Large ribosomal subunit protein uL14 from Rhizobium meliloti (strain 1021) (Ensifer meliloti).